The following is a 321-amino-acid chain: Methionyl-tRNA formyltransferase (321 aa).

(6S)-5,6,7,8-tetrahydrofolate is bound at residue 111-114 (GLLP).

It belongs to the Fmt family.

The enzyme catalyses L-methionyl-tRNA(fMet) + (6R)-10-formyltetrahydrofolate = N-formyl-L-methionyl-tRNA(fMet) + (6S)-5,6,7,8-tetrahydrofolate + H(+). Functionally, attaches a formyl group to the free amino group of methionyl-tRNA(fMet). The formyl group appears to play a dual role in the initiator identity of N-formylmethionyl-tRNA by promoting its recognition by IF2 and preventing the misappropriation of this tRNA by the elongation apparatus. The protein is Methionyl-tRNA formyltransferase of Chlamydia abortus (strain DSM 27085 / S26/3) (Chlamydophila abortus).